The primary structure comprises 138 residues: Large-conductance mechanosensitive channel (138 aa).

The next 2 membrane-spanning stretches (helical) occupy residues 10–30 (FAMR…AAFG) and 76–96 (GSFI…FLAI).

The protein belongs to the MscL family. Homopentamer.

It is found in the cell inner membrane. Channel that opens in response to stretch forces in the membrane lipid bilayer. May participate in the regulation of osmotic pressure changes within the cell. The chain is Large-conductance mechanosensitive channel from Serratia proteamaculans (strain 568).